The primary structure comprises 660 residues: Bifunctional polymyxin resistance protein ArnA (660 aa).

A formyltransferase ArnAFT region spans residues 1-304; that stretch reads MKTVVFAYHD…TLGLVQGSRL (304 aa). Residue 86 to 88 coordinates (6R)-10-formyltetrahydrofolate; the sequence is HLI. Catalysis depends on His104, which acts as the Proton donor; for formyltransferase activity. (6R)-10-formyltetrahydrofolate contacts are provided by residues Arg114 and 136–140; that span reads VKRAD. Residues 314–660 are dehydrogenase ArnADH; the sequence is RRTRVLILGV…RTVDLTDKPS (347 aa). NAD(+) contacts are provided by residues Asp347 and 368 to 369; that span reads DI. UDP-alpha-D-glucuronate-binding positions include Ala393, Tyr398, and 432-433; that span reads TS. Glu434 serves as the catalytic Proton acceptor; for decarboxylase activity. UDP-alpha-D-glucuronate-binding positions include Arg460, Asn492, 526–535, and Tyr613; that span reads KLIDGGKQKR. Residue Arg619 is the Proton donor; for decarboxylase activity of the active site.

In the N-terminal section; belongs to the Fmt family. UDP-L-Ara4N formyltransferase subfamily. The protein in the C-terminal section; belongs to the NAD(P)-dependent epimerase/dehydratase family. UDP-glucuronic acid decarboxylase subfamily. In terms of assembly, homohexamer, formed by a dimer of trimers.

It carries out the reaction UDP-alpha-D-glucuronate + NAD(+) = UDP-beta-L-threo-pentopyranos-4-ulose + CO2 + NADH. The catalysed reaction is UDP-4-amino-4-deoxy-beta-L-arabinose + (6R)-10-formyltetrahydrofolate = UDP-4-deoxy-4-formamido-beta-L-arabinose + (6S)-5,6,7,8-tetrahydrofolate + H(+). It functions in the pathway nucleotide-sugar biosynthesis; UDP-4-deoxy-4-formamido-beta-L-arabinose biosynthesis; UDP-4-deoxy-4-formamido-beta-L-arabinose from UDP-alpha-D-glucuronate: step 1/3. The protein operates within nucleotide-sugar biosynthesis; UDP-4-deoxy-4-formamido-beta-L-arabinose biosynthesis; UDP-4-deoxy-4-formamido-beta-L-arabinose from UDP-alpha-D-glucuronate: step 3/3. Its pathway is bacterial outer membrane biogenesis; lipopolysaccharide biosynthesis. Bifunctional enzyme that catalyzes the oxidative decarboxylation of UDP-glucuronic acid (UDP-GlcUA) to UDP-4-keto-arabinose (UDP-Ara4O) and the addition of a formyl group to UDP-4-amino-4-deoxy-L-arabinose (UDP-L-Ara4N) to form UDP-L-4-formamido-arabinose (UDP-L-Ara4FN). The modified arabinose is attached to lipid A and is required for resistance to polymyxin and cationic antimicrobial peptides. This is Bifunctional polymyxin resistance protein ArnA from Escherichia coli O9:H4 (strain HS).